Reading from the N-terminus, the 258-residue chain is Global transcriptional regulator CodY (258 aa).

Residues 1–156 (MSTLLSKTRR…SATIVGMELL (156 aa)) form a GAF domain region. A DNA-binding region (H-T-H motif) is located at residues 204–223 (ASKIADKVGITRSVIVNALR).

This sequence belongs to the CodY family.

The protein localises to the cytoplasm. DNA-binding global transcriptional regulator which is involved in the adaptive response to starvation and acts by directly or indirectly controlling the expression of numerous genes in response to nutrient availability. During rapid exponential growth, CodY is highly active and represses genes whose products allow adaptation to nutrient depletion. This chain is Global transcriptional regulator CodY, found in Clostridium perfringens (strain SM101 / Type A).